A 1393-amino-acid chain; its full sequence is ABC transporter G family member 3 (1393 aa).

Positions 1–14 are enriched in basic and acidic residues; sequence MEDKNNIELQEKAP. Positions 1 to 68 are disordered; it reads MEDKNNIELQ…IIYQNPTPAS (68 aa). Positions 15–50 are enriched in low complexity; it reads DNYNNNNNNNNNNNNNNNNNNNNNNNNNNNNNNDIN. Positions 100–353 constitute an ABC transporter 1 domain; sequence VSANNISYYI…YFSSIGLAPL (254 aa). ATP is bound at residue 144-151; the sequence is GIPGAGKS. The ABC transmembrane type-2 1 domain maps to 473–698; that stretch reads MQYAVRFFQA…SYADGGYQGN (226 aa). 7 helical membrane passes run 479–499, 509–529, 558–578, 585–605, 615–635, 640–660, and 724–744; these read FFQAIFMGCVIGSLFVKMGFT, LVYFAMVLHIWTTIGSVEEFF, IPISLIEAILFSSCCYWIAGF, FIVFILGMALTNLIAQGIFQV, LASLICPAIVVLFMIMSGYMI, IPGWWIWLNALSPLRYVIDMV, and VDIVIILGFVCTFFFIFFLGV. The ABC transporter 2 domain occupies 783–1035; it reads MTFQNLNYVV…VIQHFTSAGY (253 aa). 828–835 contributes to the ATP binding site; that stretch reads GPSGAGKS. Residues 1121 to 1388 enclose the ABC transmembrane type-2 2 domain; that stretch reads QTILLRFLRS…FLGYLALRFI (268 aa). A run of 6 helical transmembrane segments spans residues 1122–1142, 1157–1177, 1206–1226, 1235–1255, 1265–1285, and 1364–1384; these read TILLRFLRSFIPAIVIGTLFL, LVFLGFLFGGMASIGKVPTIV, LPMMVLTAFSYWIPMFFLTGL, FFFSLSVYLLVIMCYDSLATL, IAILVSGVGLNFLGLFGGFFI, and FYNLIILGGYFCAYTFLGYLA.

It belongs to the ABC transporter superfamily. ABCG family. PDR (TC 3.A.1.205) subfamily.

The protein localises to the membrane. The protein is ABC transporter G family member 3 (abcG3) of Dictyostelium discoideum (Social amoeba).